Reading from the N-terminus, the 611-residue chain is Chaperone protein DnaK (611 aa).

Residue Thr-173 is modified to Phosphothreonine; by autocatalysis. Residues 577 to 592 (QAAAGQAEGAEGAQDA) are compositionally biased toward low complexity. The disordered stretch occupies residues 577 to 598 (QAAAGQAEGAEGAQDAGAKKDN).

This sequence belongs to the heat shock protein 70 family.

Acts as a chaperone. This is Chaperone protein DnaK from Bacillus anthracis (strain A0248).